Consider the following 355-residue polypeptide: GTPase Obg (355 aa).

Positions 1-159 (MKLVDEAEIL…RLLKLELKLL (159 aa)) constitute an Obg domain. One can recognise an OBG-type G domain in the interval 160–342 (ADVGLLGFPN…IMKDVMAFFD (183 aa)). GTP-binding positions include 166–173 (GFPNAGKS), 191–195 (FTTLY), 213–216 (DVPG), 292–295 (NKAD), and 323–325 (SAL). The Mg(2+) site is built by Ser-173 and Thr-193.

Belongs to the TRAFAC class OBG-HflX-like GTPase superfamily. OBG GTPase family. In terms of assembly, monomer. Requires Mg(2+) as cofactor.

It localises to the cytoplasm. In terms of biological role, an essential GTPase which binds GTP, GDP and possibly (p)ppGpp with moderate affinity, with high nucleotide exchange rates and a fairly low GTP hydrolysis rate. Plays a role in control of the cell cycle, stress response, ribosome biogenesis and in those bacteria that undergo differentiation, in morphogenesis control. This Xanthomonas axonopodis pv. citri (strain 306) protein is GTPase Obg.